The sequence spans 925 residues: Periplasmic nitrate reductase (925 aa).

The segment at residues 1 to 30 is a signal peptide (tat-type signal); it reads MDRREFIKSSAAAAACSAAGIAVPSSLSAA. Residues 36–92 form the 4Fe-4S Mo/W bis-MGD-type domain; the sequence is WRWDKSACRFCGTGCGIMVATKNGKIVAVKGDPLAPVNRGLNCIKGYFNAKIMYGED. 4 residues coordinate [4Fe-4S] cluster: Cys-43, Cys-46, Cys-50, and Cys-78. Residues Lys-80, Gln-148, Asn-173, Cys-177, 210-217, Met-418, Gln-422, Asn-528, 553-554, Lys-576, Asp-603, and 815-824 each bind Mo-bis(molybdopterin guanine dinucleotide); these read WGANMAEM, SD, and TGRVLEHWHS. Residue Trp-891 coordinates substrate. The Mo-bis(molybdopterin guanine dinucleotide) site is built by Asn-899 and Lys-916.

The protein belongs to the prokaryotic molybdopterin-containing oxidoreductase family. NasA/NapA/NarB subfamily. Component of the periplasmic nitrate reductase NapAB complex composed of NapA and NapB. The cofactor is [4Fe-4S] cluster. Mo-bis(molybdopterin guanine dinucleotide) is required as a cofactor. Predicted to be exported by the Tat system. The position of the signal peptide cleavage has not been experimentally proven.

The protein localises to the periplasm. The enzyme catalyses 2 Fe(II)-[cytochrome] + nitrate + 2 H(+) = 2 Fe(III)-[cytochrome] + nitrite + H2O. Catalytic subunit of the periplasmic nitrate reductase complex NapAB. Receives electrons from NapB and catalyzes the reduction of nitrate to nitrite. This Campylobacter fetus subsp. fetus (strain 82-40) protein is Periplasmic nitrate reductase.